Reading from the N-terminus, the 183-residue chain is Translocon-associated protein subunit beta (183 aa).

A signal peptide spans 1-17 (MRLLSFVVLALFAVTQA). At 18-149 (EEGARLLASK…DRRFSPHFLD (132 aa)) the chain is on the lumenal side. N-linked (GlcNAc...) asparagine glycans are attached at residues N88 and N104. A helical membrane pass occupies residues 150 to 169 (WAAFGVMTLPSIGIPLLLWY). Topologically, residues 170–183 (SSKRKYDTPKTKKN) are cytoplasmic.

It belongs to the TRAP-beta family. Heterotetramer of TRAP-alpha, TRAP-beta, TRAP-delta and TRAP-gamma. Interacts with STING1.

It localises to the endoplasmic reticulum membrane. Its function is as follows. TRAP proteins are part of a complex whose function is to bind calcium to the ER membrane and thereby regulate the retention of ER resident proteins. The protein is Translocon-associated protein subunit beta (SSR2) of Homo sapiens (Human).